The chain runs to 1135 residues: WASH complex subunit 4 (1135 aa).

Position 2 is an N-acetylalanine (alanine 2).

The protein belongs to the SWIP family. Probable component of the WASH complex.

This is WASH complex subunit 4 from Dictyostelium discoideum (Social amoeba).